The chain runs to 458 residues: BUD13 homolog (458 aa).

Disordered regions lie at residues 16–37, 81–328, and 437–458; these read SGDIEKKKKKKNKDKNKPSGLR, KQTF…TEEL, and AKTENTKTANQSEYYKSIAEYE. The span at 138 to 148 shows a compositional bias: basic and acidic residues; it reads NRHDSDKDNSP. Composition is skewed to basic residues over residues 175–185 and 208–218; these read RNRRSPPRTRR and PRRRPSSPARR. Composition is skewed to basic and acidic residues over residues 219 to 243, 266 to 284, and 314 to 328; these read RKDDDLSPPRKSRKIEEPKKIKKEE, RDLKEESDKLRAKNSKMFE, and DQAKKERETKKTEEL. Residues 262-356 are a coiled coil; it reads LQSARDLKEE…AQLEEMARVA (95 aa).

The protein belongs to the CWC26 family.

This is BUD13 homolog from Caenorhabditis elegans.